The following is a 177-amino-acid chain: Large ribosomal subunit protein uL5c (177 aa).

This sequence belongs to the universal ribosomal protein uL5 family. As to quaternary structure, part of the 50S ribosomal subunit; contacts the 5S rRNA.

The protein resides in the plastid. Its subcellular location is the chloroplast. In terms of biological role, binds 5S rRNA, forms part of the central protuberance of the 50S subunit. This Cyanidioschyzon merolae (strain NIES-3377 / 10D) (Unicellular red alga) protein is Large ribosomal subunit protein uL5c (rpl5).